A 295-amino-acid chain; its full sequence is Malonyl-[acyl-carrier protein] O-methyltransferase (295 aa).

This sequence belongs to the methyltransferase superfamily.

It catalyses the reaction malonyl-[ACP] + S-adenosyl-L-methionine = malonyl-[ACP] methyl ester + S-adenosyl-L-homocysteine. It functions in the pathway cofactor biosynthesis; biotin biosynthesis. Its function is as follows. Converts the free carboxyl group of a malonyl-thioester to its methyl ester by transfer of a methyl group from S-adenosyl-L-methionine (SAM). It allows to synthesize pimeloyl-ACP via the fatty acid synthetic pathway. The protein is Malonyl-[acyl-carrier protein] O-methyltransferase of Xylella fastidiosa (strain M23).